The sequence spans 601 residues: Glutathione-regulated potassium-efflux system protein KefB (601 aa).

Transmembrane regions (helical) follow at residues 4 to 24 (ADLLTAGVLFLFAAVAAVPLA), 29 to 49 (IGAVLGYLLAGIAIGPWGLGF), 55 to 75 (EILHFSELGVVFLMFIIGLEL), 87 to 107 (IFGVGAAQVLLSAAVLAGLLM), 111 to 131 (FLWQAAVVGGIGLAMSSTAMA), 152 to 172 (VLLFQDLAVIPALALVPLLAG), 177 to 197 (HFDWFKVAMKVLAFAVMLIGG), 207 to 227 (FIAASGVREVFTAATLLLVLS), 230 to 250 (LFMDALGLSMALGTFIAGVLL), 262 to 282 (AIDPFKGLLLGLFFISVGMSL), 284 to 304 (LGVLYTHLLWVAASVVILVVI), 324 to 344 (MQFASVLSQGGEFAFVLFSTA), and 356 to 376 (ALLLVTVTLSMMTTPLLMKGI). The 120-residue stretch at 400–519 (KPQVIVVGFG…AGVTQFSRET (120 aa)) folds into the RCK N-terminal domain.

This sequence belongs to the monovalent cation:proton antiporter 2 (CPA2) transporter (TC 2.A.37) family. KefB subfamily. As to quaternary structure, interacts with the regulatory subunit KefG.

It localises to the cell inner membrane. Its function is as follows. Pore-forming subunit of a potassium efflux system that confers protection against electrophiles. Catalyzes K(+)/H(+) antiport. The protein is Glutathione-regulated potassium-efflux system protein KefB of Salmonella heidelberg (strain SL476).